We begin with the raw amino-acid sequence, 177 residues long: Alpha-crystallin B chain (177 aa).

N-acetylmethionine is present on Met-1. Residues 58 to 166 form the sHSP domain; that stretch reads RMPSWAQTGL…PERSVPISRD (109 aa). Zn(2+) contacts are provided by His-85, His-106, Glu-108, His-113, and His-121. Residues 155–169 show a composition bias toward basic and acidic residues; the sequence is DVPERSVPISRDEKP. The tract at residues 155-177 is disordered; sequence DVPERSVPISRDEKPAVAGPQQK.

This sequence belongs to the small heat shock protein (HSP20) family. In terms of assembly, heteromer composed of three CRYAA and one CRYAB subunits. Aggregates with homologous proteins, including the small heat shock protein HSPB1, to form large heteromeric complexes. Inter-subunit bridging via zinc ions enhances stability, which is crucial as there is no protein turn over in the lens. Interacts with HSPBAP1 and TTN/titin.

In terms of biological role, may contribute to the transparency and refractive index of the lens. The polypeptide is Alpha-crystallin B chain (CRYAB) (Squalus acanthias (Spiny dogfish)).